The sequence spans 132 residues: Glycine-rich protein 3 (132 aa).

A signal peptide spans 1–20 (MRYAVLLAVVLLLGAFTAEA).

In terms of tissue distribution, prismatic layer of shell (at protein level). Expressed primarily in the mantle with highest level in the mantle edge and lower level in the mantle pallium.

It is found in the secreted. This Pinctada maxima (Silver-lipped pearl oyster) protein is Glycine-rich protein 3.